The chain runs to 498 residues: Envelop protein OPG153 (498 aa).

A disulfide bridge connects residues Cys43 and Cys342. The disordered stretch occupies residues 352–391; it reads ATDTGHHQDSKINIKDDDVDDDDYNPKPTPIPEPYPRPPF. A compositionally biased stretch (basic and acidic residues) spans 355 to 367; that stretch reads TGHHQDSKINIKD. Over residues 378-390 the composition is skewed to pro residues; it reads KPTPIPEPYPRPP.

It belongs to the orthopoxvirus OPG153 protein family. As to quaternary structure, interacts with proteins OPG094 and OPG143. Interacts with OPG154. Interacts with OPG152. Interacts with host laminin.

It localises to the virion membrane. Its function is as follows. Envelop protein that mediates acid-dependent endocytosis into host cells. Plays an important role in endocytic entry of the virus by acting as an acid-sensitive membrane fusion suppressor. Low pH in host endosomes triggers conformational changes to allow de-repression of viral fusion complex activity and membrane fusion within vesicles. Also plays a role in bridging the mature virion with structural protein OPG152. This is Envelop protein OPG153 (Protein OPG153) from Variola virus (isolate Human/India/Ind3/1967) (VARV).